Consider the following 313-residue polypeptide: MKLTRRLTLAAFASVLALGTAAPAFSADLIAIITPAHDNPFFKAEAVGAEAKAKELGYDTLVMSHDDDANKQSEVIDTAIGRGAKAIILDNAGADATVAAIKKAKDAGIPSFLIDREINVTGIAVAQIVSNNYQGAQLGAQEFVKLMGEKGNYAELVGREADTNAGIRSQGYHDVIDDYPDLKLVAKQSANWSQTEAYAKMETILQANPDIKGVISGNDTMAMGAIAALQAAGRKDVIVVGFDGSNDVRDSIKAGGIKATVMQPAYAQAQIAVQQADAYIKNKTVPKDEKQLMDCVLINADNADKLETFALKN.

Positions 1–26 are cleaved as a signal peptide; sequence MKLTRRLTLAAFASVLALGTAAPAFS. Residues Asn-39, 115–116, 162–164, Arg-168, Asn-218, Asp-243, and Gln-263 each bind D-apiofuranose; these read DR and DTN.

It belongs to the bacterial solute-binding protein 2 family.

The protein localises to the periplasm. Functionally, part of an ABC transporter complex involved in D-apiose import. The protein is D-apiose import binding protein of Rhizobium rhizogenes (strain K84 / ATCC BAA-868) (Agrobacterium radiobacter).